Here is a 265-residue protein sequence, read N- to C-terminus: Mlc titration factor A (265 aa).

Residues His-111, His-148, His-152, and Glu-211 each coordinate Zn(2+).

It belongs to the MtfA family. As to quaternary structure, interacts with Mlc. Zn(2+) serves as cofactor.

Its subcellular location is the cytoplasm. Involved in the modulation of the activity of the glucose-phosphotransferase system (glucose-PTS). Interacts with the transcriptional repressor Mlc, preventing its interaction with DNA and leading to the modulation of expression of genes regulated by Mlc, including ptsG, which encodes the PTS system glucose-specific EIICB component. Functionally, shows zinc-dependent metallopeptidase activity. The sequence is that of Mlc titration factor A from Pectobacterium atrosepticum (strain SCRI 1043 / ATCC BAA-672) (Erwinia carotovora subsp. atroseptica).